The following is a 159-amino-acid chain: Probable deoxyuridine 5'-triphosphate nucleotidohydrolase (159 aa).

The protein belongs to the dCTP deaminase family. Archaeal dUTPase subfamily.

It carries out the reaction dUTP + H2O = dUMP + diphosphate + H(+). It participates in pyrimidine metabolism; dUMP biosynthesis; dUMP from dCTP (dUTP route): step 2/2. In terms of biological role, this enzyme is involved in nucleotide metabolism: it produces dUMP, the immediate precursor of thymidine nucleotides and it decreases the intracellular concentration of dUTP so that uracil cannot be incorporated into DNA. The protein is Probable deoxyuridine 5'-triphosphate nucleotidohydrolase of Aeropyrum pernix (strain ATCC 700893 / DSM 11879 / JCM 9820 / NBRC 100138 / K1).